Here is a 410-residue protein sequence, read N- to C-terminus: 26S proteasome non-ATPase regulatory subunit 6 (410 aa).

The 176-residue stretch at 207–382 (DFAGAADLFL…GVIEVNHRDS (176 aa)) folds into the PCI domain.

Belongs to the proteasome subunit S10 family. In terms of tissue distribution, expressed in multiple tissues including the intestine, pharynx and hypodermis.

In terms of biological role, acts as a regulatory subunit of the 26S proteasome which is involved in the ATP-dependent degradation of ubiquitinated proteins. This is 26S proteasome non-ATPase regulatory subunit 6 (rpn-7) from Caenorhabditis elegans.